The sequence spans 213 residues: MFHVKQPLINCQIIRTLLPAGSGVSRETGEKLALYESLLTRWTRTVNLVSRNDVEHIRDRHILDSLQLLPLLEPLPGPLIDIGSGGGLPGLVLAIATGRETHLVEADQRKAAFLREAARATESNVTVHACRIEQCNIAPAPVLTARALAPLNVLLGYALRLLSKNGVALFMKGKTAEQELTEAATEWHMRVQLSPSRTHPEASILRIDEISRV.

Residues Gly83, Leu88, 132-133 (IE), and Arg146 each bind S-adenosyl-L-methionine.

This sequence belongs to the methyltransferase superfamily. RNA methyltransferase RsmG family.

The protein localises to the cytoplasm. It catalyses the reaction guanosine(527) in 16S rRNA + S-adenosyl-L-methionine = N(7)-methylguanosine(527) in 16S rRNA + S-adenosyl-L-homocysteine. Specifically methylates the N7 position of guanine in position 527 of 16S rRNA. The polypeptide is Ribosomal RNA small subunit methyltransferase G (Granulibacter bethesdensis (strain ATCC BAA-1260 / CGDNIH1)).